The chain runs to 665 residues: Protein LOW PHOTOSYNTHETIC EFFICIENCY 1, chloroplastic (665 aa).

Residues M1–L68 constitute a chloroplast transit peptide. PPR repeat units lie at residues P145 to S179, G181 to P217, N218 to P252, N253 to K283, G309 to P344, S345 to R375, S380 to P414, V422 to P456, Q457 to P491, T492 to P526, N527 to P561, S562 to P596, and N597 to L631.

This sequence belongs to the PPR family. P subfamily. As to quaternary structure, interacts with HCF173.

Its subcellular location is the plastid. It is found in the chloroplast thylakoid membrane. The protein resides in the chloroplast stroma. Its function is as follows. Required for light-regulated photosystem II (PSII) biogenesis and grana thylakoids formation by binding to the 5' UTR of PSII subunit mRNAs (e.g. psbJ, psbN and psbA) in a light-dependent manner through a redox-based mechanism, and facilitating the association of HCF173 with target mRNAs, which encodes PSII reaction center proteins (e.g. J, N and D1), thus regulating its expression by modulating ribosome loading. This chain is Protein LOW PHOTOSYNTHETIC EFFICIENCY 1, chloroplastic, found in Arabidopsis thaliana (Mouse-ear cress).